We begin with the raw amino-acid sequence, 129 residues long: DNA-directed RNA polymerase subunit omega (129 aa).

A disordered region spans residues 77 to 98 (VDEPESEVVPALSSAPQNPEAI).

The protein belongs to the RNA polymerase subunit omega family. As to quaternary structure, the RNAP catalytic core consists of 2 alpha, 1 beta, 1 beta' and 1 omega subunit. When a sigma factor is associated with the core the holoenzyme is formed, which can initiate transcription.

The catalysed reaction is RNA(n) + a ribonucleoside 5'-triphosphate = RNA(n+1) + diphosphate. Functionally, promotes RNA polymerase assembly. Latches the N- and C-terminal regions of the beta' subunit thereby facilitating its interaction with the beta and alpha subunits. This Methylocella silvestris (strain DSM 15510 / CIP 108128 / LMG 27833 / NCIMB 13906 / BL2) protein is DNA-directed RNA polymerase subunit omega.